A 362-amino-acid polypeptide reads, in one-letter code: MKEKWLMALASEWDDVKPLITTALESGFDCVVVSRDHIELVRELGSIRIACFGRERGSEDLLIMDTSVPRENQIKSVEKIGRPIGGYVEIRSKEDELFATELGKHVDYLLVVGTDWKVIPLENMIAALQGYDCKIISCVRSSEEAEVALSTLEHGADGVLLDTRDPSEIKRVQAAAERLGMSRIDLKTATVVAVKPVGMGDRVCVDTCSLMRRGEGMLVGSQSRAFFLVQSEAEESPYVAARPFRVNAGAVHAYIRVGDKTRYLSELKSGDEVTIVDKDGMTRSAVVGRVKIERRPMILVEAEVDGERVSTLLQNAETIKLVSHDGTPISVAELKPGDKVLVHVETSARHFGMSIEETIIER.

This sequence belongs to the archaeal-type DHQ synthase family.

It catalyses the reaction 2-amino-2,3,7-trideoxy-D-lyxo-hept-6-ulosonate + NAD(+) + H2O = 3-dehydroquinate + NH4(+) + NADH + H(+). Catalyzes the oxidative deamination and cyclization of 2-amino-3,7-dideoxy-D-threo-hept-6-ulosonic acid (ADH) to yield 3-dehydroquinate (DHQ), which is fed into the canonical shikimic pathway of aromatic amino acid biosynthesis. This chain is 3-dehydroquinate synthase, found in Methanothrix thermoacetophila (strain DSM 6194 / JCM 14653 / NBRC 101360 / PT) (Methanosaeta thermophila).